We begin with the raw amino-acid sequence, 1395 residues long: DNA-directed RNA polymerase subunit beta' (1395 aa).

4 residues coordinate Zn(2+): Cys70, Cys72, Cys85, and Cys88. Mg(2+)-binding residues include Asp470, Asp472, and Asp474. Zn(2+) contacts are provided by Cys815, Cys889, Cys896, and Cys899.

This sequence belongs to the RNA polymerase beta' chain family. In terms of assembly, the RNAP catalytic core consists of 2 alpha, 1 beta, 1 beta' and 1 omega subunit. When a sigma factor is associated with the core the holoenzyme is formed, which can initiate transcription. Mg(2+) serves as cofactor. Requires Zn(2+) as cofactor.

It catalyses the reaction RNA(n) + a ribonucleoside 5'-triphosphate = RNA(n+1) + diphosphate. In terms of biological role, DNA-dependent RNA polymerase catalyzes the transcription of DNA into RNA using the four ribonucleoside triphosphates as substrates. The polypeptide is DNA-directed RNA polymerase subunit beta' (Anaeromyxobacter sp. (strain Fw109-5)).